The chain runs to 68 residues: Urocalcin (68 aa).

An N-terminal signal peptide occupies residues 1–27 (MKASTLVVIFIVIFITISSFSIHDVQA). Residues 28 to 35 (SGVEKREQ) constitute a propeptide that is removed on maturation. Disulfide bonds link Cys-38–Cys-52, Cys-45–Cys-56, and Cys-51–Cys-67. An essential for stimulation of [3H]ryanodine binding to RYR1 region spans residues 57–59 (KRR).

The protein belongs to the scorpion calcin family. In terms of tissue distribution, expressed by the venom gland.

The protein resides in the secreted. In terms of biological role, this toxin only weakly stabilizes ryanodine receptor 1 (RyR1) opening in a long-lasting subconductance state (55% of the full conductance state obtained only at high concentrations (1 uM)). In addition, it has been shown to dose-dependently stimulate ryanodine binding to RyR1 with the lowest activity of all calcins (EC(50)=376 nM). It also augments the bell-shaped calcium-[3H]ryanodine binding curve that is maximal at about 10 uM calcium concentration. It binds a different site as ryanodine. It acts synergistically with caffeine. In contrast to other calcins, it does not trigger calcium release from sarcoplasmic vesicles even at high concentration (1 uM). In vivo, intracerebroventricular injection into mice induces neurotoxic symptoms, followed by death. The sequence is that of Urocalcin from Urodacus yaschenkoi (Inland robust scorpion).